The following is a 368-amino-acid chain: MSTKTITVVPGDHVGTEICDEAIKVLKAIEKVSPVKFEFKHHLIGGAAIDATGVPLPDETLEAAKSSDAVLLGAVGGPKWGTGAVRPEQGLLKIRKELNLYANLRPCNFVSDSLLELSPLKSEIVKGTNFTVVRELVGGIYFGERQEQEESSDGQSAWDTEKYSVEEVTRITRMAAFMALQHNPPLPIWSLDKANVLALSRLWRKTVDHVMSTEFPQLKVQHQLIDSAAMILVKSPSQLNGVIITSNMFGDIISDEASVIPGSLGLLPSASLASLPDTNSAFGLYEPCHGSAPDLPANKVNPVATILSVAMMLRLSLDCLKEAEALEKAVGQVLDAGIRTADLRGSSSTKEVGDAVAAAVEKILAEGK.

NAD(+) is bound at residue Gly-77–Glu-88. Residues Arg-95, Arg-105, Arg-134, and Asp-226 each coordinate substrate. Mg(2+) contacts are provided by Asp-226, Asp-251, and Asp-255. Position 290–301 (Gly-290–Asn-301) interacts with NAD(+).

This sequence belongs to the isocitrate and isopropylmalate dehydrogenases family. As to quaternary structure, homodimer. It depends on Mg(2+) as a cofactor. Mn(2+) is required as a cofactor.

The protein localises to the cytoplasm. The enzyme catalyses (2R,3S)-3-isopropylmalate + NAD(+) = 4-methyl-2-oxopentanoate + CO2 + NADH. The protein operates within amino-acid biosynthesis; L-leucine biosynthesis; L-leucine from 3-methyl-2-oxobutanoate: step 3/4. Its function is as follows. Catalyzes the oxidation of 3-carboxy-2-hydroxy-4-methylpentanoate (3-isopropylmalate) to 3-carboxy-4-methyl-2-oxopentanoate. The product decarboxylates to 4-methyl-2 oxopentanoate. This is 3-isopropylmalate dehydrogenase (LEU2) from Kodamaea ohmeri (Yeast).